A 61-amino-acid polypeptide reads, in one-letter code: Small ribosomal subunit protein uS14 (61 aa).

Cys24, Cys27, Cys40, and Cys43 together coordinate Zn(2+).

This sequence belongs to the universal ribosomal protein uS14 family. Zinc-binding uS14 subfamily. Part of the 30S ribosomal subunit. Contacts proteins S3 and S10. Zn(2+) serves as cofactor.

In terms of biological role, binds 16S rRNA, required for the assembly of 30S particles and may also be responsible for determining the conformation of the 16S rRNA at the A site. This chain is Small ribosomal subunit protein uS14, found in Trichlorobacter lovleyi (strain ATCC BAA-1151 / DSM 17278 / SZ) (Geobacter lovleyi).